The sequence spans 42 residues: Photosystem II reaction center protein J (42 aa).

The helical transmembrane segment at 10-30 threads the bilayer; that stretch reads IPLWLVGTVVGTLAIGLLAVF.

Belongs to the PsbJ family. As to quaternary structure, PSII is composed of 1 copy each of membrane proteins PsbA, PsbB, PsbC, PsbD, PsbE, PsbF, PsbH, PsbI, PsbJ, PsbK, PsbL, PsbM, PsbT, PsbX, PsbY, PsbZ, Psb30/Ycf12, at least 3 peripheral proteins of the oxygen-evolving complex and a large number of cofactors. It forms dimeric complexes.

It localises to the plastid. The protein localises to the chloroplast thylakoid membrane. Functionally, one of the components of the core complex of photosystem II (PSII). PSII is a light-driven water:plastoquinone oxidoreductase that uses light energy to abstract electrons from H(2)O, generating O(2) and a proton gradient subsequently used for ATP formation. It consists of a core antenna complex that captures photons, and an electron transfer chain that converts photonic excitation into a charge separation. This Chlamydomonas reinhardtii (Chlamydomonas smithii) protein is Photosystem II reaction center protein J.